We begin with the raw amino-acid sequence, 149 residues long: Protein FAM72A (149 aa).

This sequence belongs to the FAM72 family. In terms of assembly, interacts with UNG. As to expression, expressed at high levels in stomach and also in kidney and, at low levels, in heart (at protein level). In the stomach, highly expressed in foveolar cells, parietal cells and chief cells (at protein level). In kidney, expressed in endothelial cells, mesangial and epithelial cells (parietal and visceral epithelium) around glomerulus (at protein level).

It is found in the cytoplasm. The protein resides in the mitochondrion. In terms of biological role, may play a role in the regulation of cellular reactive oxygen species metabolism. May participate in cell growth regulation. The polypeptide is Protein FAM72A (FAM72A) (Bos taurus (Bovine)).